Consider the following 676-residue polypeptide: UvrABC system protein B (676 aa).

The Helicase ATP-binding domain maps to 26–414 (EGLENGLAHQ…SDGEIAEQVV (389 aa)). An ATP-binding site is contributed by 39–46 (GVTGSGKT). The Beta-hairpin signature appears at 92 to 115 (YFDYYQPEAYVPTTDTFIEKDSSV). In terms of domain architecture, Helicase C-terminal spans 432 to 598 (QVDDLLSEIR…ALKKDVADIL (167 aa)). The UVR domain occupies 636 to 671 (EKAIQKLESKMYQHAKDLEFEQAAQVRDEIDNLRKQ).

Belongs to the UvrB family. Forms a heterotetramer with UvrA during the search for lesions. Interacts with UvrC in an incision complex.

It localises to the cytoplasm. Its function is as follows. The UvrABC repair system catalyzes the recognition and processing of DNA lesions. A damage recognition complex composed of 2 UvrA and 2 UvrB subunits scans DNA for abnormalities. Upon binding of the UvrA(2)B(2) complex to a putative damaged site, the DNA wraps around one UvrB monomer. DNA wrap is dependent on ATP binding by UvrB and probably causes local melting of the DNA helix, facilitating insertion of UvrB beta-hairpin between the DNA strands. Then UvrB probes one DNA strand for the presence of a lesion. If a lesion is found the UvrA subunits dissociate and the UvrB-DNA preincision complex is formed. This complex is subsequently bound by UvrC and the second UvrB is released. If no lesion is found, the DNA wraps around the other UvrB subunit that will check the other stand for damage. This chain is UvrABC system protein B, found in Aliivibrio fischeri (strain ATCC 700601 / ES114) (Vibrio fischeri).